The sequence spans 308 residues: Flavonol synthase 3 (308 aa).

The 101-residue stretch at 167 to 267 (TIEYLMKINY…RISWPVFVES (101 aa)) folds into the Fe2OG dioxygenase domain. Residue 175-177 (NYY) participates in 2-oxoglutarate binding. The Fe cation site is built by His192, Asp194, and His248. 258–260 (RIS) contacts 2-oxoglutarate.

The protein belongs to the iron/ascorbate-dependent oxidoreductase family. Fe(2+) is required as a cofactor. In terms of tissue distribution, widely expressed at low levels.

The catalysed reaction is a (2R,3R)-dihydroflavonol + 2-oxoglutarate + O2 = a flavonol + succinate + CO2 + H2O. It participates in secondary metabolite biosynthesis; flavonoid biosynthesis. Catalyzes the formation of flavonols from dihydroflavonols. Possesses low activity in vitro towards dihydrokaempferol and dihydroquercetin producing kaempferol and quercitin, respectively. The sequence is that of Flavonol synthase 3 from Arabidopsis thaliana (Mouse-ear cress).